Here is a 213-residue protein sequence, read N- to C-terminus: High frequency lysogenization protein HflD (213 aa).

Residues 99 to 126 adopt a coiled-coil conformation; the sequence is LSSAKGALDTLGNRINGLQRQLEHFDLQ.

This sequence belongs to the HflD family. In terms of assembly, interacts with CII protein from phage lambda.

Its subcellular location is the cytoplasm. The protein resides in the cell inner membrane. Negative regulator of phage lambda lysogenization. Contributes to the degradation of the phage regulatory protein CII. Acts probably by holding CII on the membrane surface, away from the target promoters, but close to the FtsH protease. This chain is High frequency lysogenization protein HflD, found in Escherichia coli O157:H7.